The chain runs to 927 residues: Alpha-catenin-like protein hmp-1 (927 aa).

Coiled-coil stretches lie at residues 319–354 (TREN…RRDD) and 672–696 (QENQ…QIDI). The tract at residues 901-927 (RNEIETGRDSDDEELDRRHQQRINGRL) is disordered.

Belongs to the vinculin/alpha-catenin family. As to quaternary structure, component of a core catenin-cadherin complex consisting of hmr-1, hmp-1 and hmp-2; the complex localizes to adherens junctions. May interact with hmp-2. As to expression, epidermal cells.

The protein resides in the cell junction. Its subcellular location is the adherens junction. The protein localises to the cytoplasm. In terms of biological role, required for cell migration during body enclosure and cell shape changes during body elongation. Required for proper localization of other junctional components, such as pac-1. This chain is Alpha-catenin-like protein hmp-1 (hmp-1), found in Caenorhabditis elegans.